A 132-amino-acid chain; its full sequence is DNA-directed RNA polymerase subunit omega (132 aa).

It belongs to the RNA polymerase subunit omega family. As to quaternary structure, the RNAP catalytic core consists of 2 alpha, 1 beta, 1 beta' and 1 omega subunit. When a sigma factor is associated with the core the holoenzyme is formed, which can initiate transcription.

The enzyme catalyses RNA(n) + a ribonucleoside 5'-triphosphate = RNA(n+1) + diphosphate. Functionally, promotes RNA polymerase assembly. Latches the N- and C-terminal regions of the beta' subunit thereby facilitating its interaction with the beta and alpha subunits. In Bartonella bacilliformis (strain ATCC 35685 / KC583 / Herrer 020/F12,63), this protein is DNA-directed RNA polymerase subunit omega.